A 371-amino-acid polypeptide reads, in one-letter code: E3 ubiquitin-protein ligase RHF1A (371 aa).

Residues 46–87 (CSICLEPFTLQDPSTVTSCKHEYHLQCIIEWSQRSKECPICW) form an RING-type; atypical zinc finger. Disordered regions lie at residues 199–254 (HQNS…SSLP) and 348–371 (EANSKSNNNGDKTEPQKLQGGETC). The segment covering 200-225 (QNSNPCPSPGSMTPSPVSGHSSIPAD) has biased composition (polar residues). Residues 226-252 (SNNGSRISPGPSPSRSSQSPKSPEASS) show a composition bias toward low complexity.

Interacts with KRP6. Expressed in stems, flowers, green siliques, cauline leaves, seeds and roots.

The enzyme catalyses S-ubiquitinyl-[E2 ubiquitin-conjugating enzyme]-L-cysteine + [acceptor protein]-L-lysine = [E2 ubiquitin-conjugating enzyme]-L-cysteine + N(6)-ubiquitinyl-[acceptor protein]-L-lysine.. It functions in the pathway protein modification; protein ubiquitination. Functionally, E3 ubiquitin-protein ligase involved in the positive regulation of the gametogenesis progression. Mediates the proteasomal degradation of KRP6, a cyclin-dependent kinase inhibitor which accumulates during meiosis and blocks the progression of subsequent mitoses during gametophyte development. Functions in association with RHF2A. Possesses E3 ubiquitin-protein ligase activity when associated with the E2 enzyme UBC8 in vitro. The chain is E3 ubiquitin-protein ligase RHF1A from Arabidopsis thaliana (Mouse-ear cress).